The sequence spans 504 residues: Anaerobic nitric oxide reductase transcription regulator NorR (504 aa).

Position 57 is a 4-aspartylphosphate (aspartate 57). Residues 187–416 form the Sigma-54 factor interaction domain; it reads MIGLSPGMTQ…LEHAIHRAVV (230 aa). ATP-binding positions include 215 to 222 and 278 to 287; these read GETGTGKE and ADNGTLFLDE. The H-T-H motif DNA-binding region spans 479–498; sequence WAASARMLETDVANLHRLAK.

Its pathway is nitrogen metabolism; nitric oxide reduction. Required for the expression of anaerobic nitric oxide (NO) reductase, acts as a transcriptional activator for at least the norVW operon. Activation also requires sigma-54. In Escherichia coli (strain SMS-3-5 / SECEC), this protein is Anaerobic nitric oxide reductase transcription regulator NorR.